The chain runs to 276 residues: NADPH-dependent 7-cyano-7-deazaguanine reductase (276 aa).

83–85 provides a ligand contact to substrate; it reads IES. 85-86 contacts NADPH; it reads SK. Residue Cys184 is the Thioimide intermediate of the active site. The active-site Proton donor is the Asp191. 223 to 224 is a substrate binding site; the sequence is HE. 252 to 253 provides a ligand contact to NADPH; sequence RG.

The protein belongs to the GTP cyclohydrolase I family. QueF type 2 subfamily. As to quaternary structure, homodimer.

It is found in the cytoplasm. It carries out the reaction 7-aminomethyl-7-carbaguanine + 2 NADP(+) = 7-cyano-7-deazaguanine + 2 NADPH + 3 H(+). It functions in the pathway tRNA modification; tRNA-queuosine biosynthesis. In terms of biological role, catalyzes the NADPH-dependent reduction of 7-cyano-7-deazaguanine (preQ0) to 7-aminomethyl-7-deazaguanine (preQ1). In Pseudomonas fluorescens (strain Pf0-1), this protein is NADPH-dependent 7-cyano-7-deazaguanine reductase.